The primary structure comprises 317 residues: Melanoma-associated antigen 4 (317 aa).

Residues 1 to 14 are compositionally biased toward basic and acidic residues; sequence MSSEQKSQHCKPEE. Positions 1–102 are disordered; the sequence is MSSEQKSQHC…EEGPSTSPDA (102 aa). Polar residues predominate over residues 66-82; sequence PQGASALPTTISFTCWR. In terms of domain architecture, MAGE spans 110–309; the sequence is LSNKVDELAH…IAYPSLREAA (200 aa).

In terms of tissue distribution, expressed in many tumors of several types, such as melanoma, head and neck squamous cell carcinoma, lung carcinoma and breast carcinoma, but not in normal tissues except for testes and placenta.

Functionally, regulates cell proliferation through the inhibition of cell cycle arrest at the G1 phase. Also negatively regulates p53-mediated apoptosis. The polypeptide is Melanoma-associated antigen 4 (MAGEA4) (Homo sapiens (Human)).